We begin with the raw amino-acid sequence, 147 residues long: Large ribosomal subunit protein uL13 (147 aa).

Belongs to the universal ribosomal protein uL13 family. Part of the 50S ribosomal subunit.

Its function is as follows. This protein is one of the early assembly proteins of the 50S ribosomal subunit, although it is not seen to bind rRNA by itself. It is important during the early stages of 50S assembly. The polypeptide is Large ribosomal subunit protein uL13 (Pseudothermotoga lettingae (strain ATCC BAA-301 / DSM 14385 / NBRC 107922 / TMO) (Thermotoga lettingae)).